Reading from the N-terminus, the 257-residue chain is Ribonuclease HII (257 aa).

Positions 72–257 constitute an RNase H type-2 domain; that stretch reads ERVAGIDEVG…FSPVQKILQA (186 aa). The a divalent metal cation site is built by D78, E79, and D170.

The protein belongs to the RNase HII family. Mn(2+) serves as cofactor. Mg(2+) is required as a cofactor.

Its subcellular location is the cytoplasm. It carries out the reaction Endonucleolytic cleavage to 5'-phosphomonoester.. In terms of biological role, endonuclease that specifically degrades the RNA of RNA-DNA hybrids. This chain is Ribonuclease HII, found in Levilactobacillus brevis (strain ATCC 367 / BCRC 12310 / CIP 105137 / JCM 1170 / LMG 11437 / NCIMB 947 / NCTC 947) (Lactobacillus brevis).